The chain runs to 414 residues: Dihydroorotase (414 aa).

Residues histidine 57 and histidine 59 each contribute to the Zn(2+) site. Residues 59-61 (HLR) and asparagine 91 contribute to the substrate site. Zn(2+) contacts are provided by lysine 135, histidine 164, histidine 204, and aspartate 272. Lysine 135 bears the N6-carboxylysine mark. Aspartate 272 is an active-site residue. Substrate contacts are provided by residues histidine 276 and 286–287 (AG).

The protein belongs to the metallo-dependent hydrolases superfamily. DHOase family. Class I DHOase subfamily. Zn(2+) is required as a cofactor.

It catalyses the reaction (S)-dihydroorotate + H2O = N-carbamoyl-L-aspartate + H(+). Its pathway is pyrimidine metabolism; UMP biosynthesis via de novo pathway; (S)-dihydroorotate from bicarbonate: step 3/3. Catalyzes the reversible cyclization of carbamoyl aspartate to dihydroorotate. The chain is Dihydroorotase from Pyrococcus furiosus (strain ATCC 43587 / DSM 3638 / JCM 8422 / Vc1).